A 188-amino-acid polypeptide reads, in one-letter code: dCTP deaminase (188 aa).

DCTP contacts are provided by residues 111-116, 135-137, Gln156, Tyr170, and Gln180; these read KSTYAR and TLE. Glu137 (proton donor/acceptor) is an active-site residue.

The protein belongs to the dCTP deaminase family. In terms of assembly, homotrimer.

The enzyme catalyses dCTP + H2O + H(+) = dUTP + NH4(+). The protein operates within pyrimidine metabolism; dUMP biosynthesis; dUMP from dCTP (dUTP route): step 1/2. Catalyzes the deamination of dCTP to dUTP. The polypeptide is dCTP deaminase (Dechloromonas aromatica (strain RCB)).